The primary structure comprises 691 residues: DNA-directed RNA polymerase subunit beta' (691 aa).

The Zn(2+) site is built by Cys76, Cys78, Cys94, and Cys97. Mg(2+)-binding residues include Asp496, Asp498, and Asp500.

It belongs to the RNA polymerase beta' chain family. RpoC1 subfamily. Mg(2+) is required as a cofactor. The cofactor is Zn(2+).

It localises to the plastid. It carries out the reaction RNA(n) + a ribonucleoside 5'-triphosphate = RNA(n+1) + diphosphate. In terms of biological role, DNA-dependent RNA polymerase catalyzes the transcription of DNA into RNA using the four ribonucleoside triphosphates as substrates. This chain is DNA-directed RNA polymerase subunit beta', found in Cuscuta exaltata (Tall dodder).